The chain runs to 395 residues: Receptor-like cytoplasmic kinase 176 (395 aa).

Residues 1–45 (MGNCWGAKISSESPCRSASSPSGGTSKYASNSSVSAASVPPTPRS) form a disordered region. Low complexity-rich tracts occupy residues 10–22 (SSES…SSPS) and 29–39 (ASNSSVSAASV). Residues 70-355 (FRPDSVLGEG…EQVVAVLEQL (286 aa)) enclose the Protein kinase domain. Residues 76–84 (LGEGGFGSV) and Lys108 each bind ATP. Asp205 (proton acceptor) is an active-site residue. The tract at residues 359-395 (KETGANPQLQKKSSSKNAGSNGSKPSSKGKPANARLV) is disordered. Positions 369 to 395 (KKSSSKNAGSNGSKPSSKGKPANARLV) are enriched in low complexity.

It belongs to the protein kinase superfamily. Ser/Thr protein kinase family. Interacts with CERK1.

The enzyme catalyses L-seryl-[protein] + ATP = O-phospho-L-seryl-[protein] + ADP + H(+). The catalysed reaction is L-threonyl-[protein] + ATP = O-phospho-L-threonyl-[protein] + ADP + H(+). In terms of biological role, functions downstream of CERK1 in the microbial peptidoglycans (PGNs) and fungal chitin signaling pathways that mediate innate immunity. Participates in the activation of defense genes during response to PGN and chitin. This chain is Receptor-like cytoplasmic kinase 176, found in Oryza sativa subsp. japonica (Rice).